The chain runs to 426 residues: Tyrosine--tRNA ligase (426 aa).

Residue tyrosine 38 coordinates L-tyrosine. A 'HIGH' region motif is present at residues 43–52 (PTADSLHIGS). L-tyrosine-binding residues include tyrosine 176 and glutamine 180. The short motif at 236 to 240 (KFGKT) is the 'KMSKS' region element. ATP is bound at residue lysine 239. Residues 359 to 426 (QTIVEVLTQS…KKLFNLYIWK (68 aa)) form the S4 RNA-binding domain.

The protein belongs to the class-I aminoacyl-tRNA synthetase family. TyrS type 1 subfamily. In terms of assembly, homodimer.

It is found in the cytoplasm. The catalysed reaction is tRNA(Tyr) + L-tyrosine + ATP = L-tyrosyl-tRNA(Tyr) + AMP + diphosphate + H(+). Catalyzes the attachment of tyrosine to tRNA(Tyr) in a two-step reaction: tyrosine is first activated by ATP to form Tyr-AMP and then transferred to the acceptor end of tRNA(Tyr). In Aliivibrio salmonicida (strain LFI1238) (Vibrio salmonicida (strain LFI1238)), this protein is Tyrosine--tRNA ligase.